The primary structure comprises 424 residues: Enolase (424 aa).

Glutamine 162 provides a ligand contact to (2R)-2-phosphoglycerate. Residue glutamate 204 is the Proton donor of the active site. Mg(2+) is bound by residues aspartate 241, glutamate 284, and aspartate 311. Lysine 336, arginine 365, serine 366, and lysine 387 together coordinate (2R)-2-phosphoglycerate. Residue lysine 336 is the Proton acceptor of the active site.

Belongs to the enolase family. The cofactor is Mg(2+).

The protein resides in the cytoplasm. The protein localises to the secreted. It is found in the cell surface. The enzyme catalyses (2R)-2-phosphoglycerate = phosphoenolpyruvate + H2O. The protein operates within carbohydrate degradation; glycolysis; pyruvate from D-glyceraldehyde 3-phosphate: step 4/5. Its function is as follows. Catalyzes the reversible conversion of 2-phosphoglycerate (2-PG) into phosphoenolpyruvate (PEP). It is essential for the degradation of carbohydrates via glycolysis. In Rhizobium johnstonii (strain DSM 114642 / LMG 32736 / 3841) (Rhizobium leguminosarum bv. viciae), this protein is Enolase.